Here is a 323-residue protein sequence, read N- to C-terminus: Methionyl-tRNA formyltransferase (323 aa).

S113–P116 is a binding site for (6S)-5,6,7,8-tetrahydrofolate.

Belongs to the Fmt family.

It catalyses the reaction L-methionyl-tRNA(fMet) + (6R)-10-formyltetrahydrofolate = N-formyl-L-methionyl-tRNA(fMet) + (6S)-5,6,7,8-tetrahydrofolate + H(+). Functionally, attaches a formyl group to the free amino group of methionyl-tRNA(fMet). The formyl group appears to play a dual role in the initiator identity of N-formylmethionyl-tRNA by promoting its recognition by IF2 and preventing the misappropriation of this tRNA by the elongation apparatus. This chain is Methionyl-tRNA formyltransferase, found in Nitrosococcus oceani (strain ATCC 19707 / BCRC 17464 / JCM 30415 / NCIMB 11848 / C-107).